A 389-amino-acid chain; its full sequence is LL-diaminopimelate aminotransferase (389 aa).

Positions 16 and 41 each coordinate substrate. Residues Tyr-70, 104 to 105, Tyr-129, Asn-179, Tyr-210, and 239 to 241 each bind pyridoxal 5'-phosphate; these read SK and SLS. Substrate contacts are provided by Lys-105, Tyr-129, and Asn-179. Position 242 is an N6-(pyridoxal phosphate)lysine (Lys-242). Position 250 (Arg-250) interacts with pyridoxal 5'-phosphate. Arg-369 serves as a coordination point for substrate.

The protein belongs to the class-I pyridoxal-phosphate-dependent aminotransferase family. LL-diaminopimelate aminotransferase subfamily. As to quaternary structure, homodimer. Pyridoxal 5'-phosphate serves as cofactor.

The catalysed reaction is (2S,6S)-2,6-diaminopimelate + 2-oxoglutarate = (S)-2,3,4,5-tetrahydrodipicolinate + L-glutamate + H2O + H(+). It functions in the pathway amino-acid biosynthesis; L-lysine biosynthesis via DAP pathway; LL-2,6-diaminopimelate from (S)-tetrahydrodipicolinate (aminotransferase route): step 1/1. In terms of biological role, involved in the synthesis of meso-diaminopimelate (m-DAP or DL-DAP), required for both lysine and peptidoglycan biosynthesis. Catalyzes the direct conversion of tetrahydrodipicolinate to LL-diaminopimelate. The polypeptide is LL-diaminopimelate aminotransferase (Nitratidesulfovibrio vulgaris (strain DSM 19637 / Miyazaki F) (Desulfovibrio vulgaris)).